The following is a 497-amino-acid chain: Latent membrane protein 2 (497 aa).

Positions Met1–Ser108 are disordered. Residues Met1–Val123 lie on the Cytoplasmic side of the membrane. Polar residues predominate over residues Asn27–Thr41. The PPxY motif motif lies at Pro97–Tyr101. Tyr112 bears the Phosphotyrosine; by host mark. Residues Cys124 to Phe144 traverse the membrane as a helical segment. Topologically, residues Thr145–Ser147 are extracellular. A helical transmembrane segment spans residues Val148 to Ala168. The Cytoplasmic segment spans residues Ser169–Lys177. Residues Leu178–Trp198 form a helical membrane-spanning segment. At Arg199–Ala211 the chain is on the extracellular side. A helical membrane pass occupies residues Leu212–Ile232. Residues Leu233–Arg241 lie on the Cytoplasmic side of the membrane. A helical transmembrane segment spans residues Leu242–Val262. The Extracellular segment spans residues Leu263 to Pro267. The chain crosses the membrane as a helical span at residues Leu268–Leu288. The Cytoplasmic portion of the chain corresponds to Ser289–Thr296. Residues Leu297–Gly317 traverse the membrane as a helical segment. A topological domain (extracellular) is located at residue Thr318. A helical transmembrane segment spans residues Leu319 to Cys339. Residues Ser340–Arg354 are Cytoplasmic-facing. The chain crosses the membrane as a helical span at residues Leu355–Ile375. The Extracellular portion of the chain corresponds to Leu376 to Phe388. The helical transmembrane segment at Ile389–Ile409 threads the bilayer. Over Leu410–Pro422 the chain is Cytoplasmic. Residues Val423–Met443 form a helical membrane-spanning segment. Over Ser444 to Ser449 the chain is Extracellular. Residues Ala450 to Ile470 traverse the membrane as a helical segment. The Cytoplasmic segment spans residues Arg471 to Val497.

The protein belongs to the herpesviridae LMP-2 family. As to quaternary structure, the cytoplasmic N-terminal domain interacts with human SRC family protein tyrosine kinases SYK and LYN. Binds human ITCH, WWP2 and NEDD4L. Post-translationally, phosphorylated on cytoplasmic N-terminal tyrosine residues, possibly by human LYN. Can be ubiquitinated by human ITCH and WWP2 on the N-terminus in a lysine-independent manner.

It localises to the host cell membrane. Its subcellular location is the host endomembrane system. The protein localises to the host cytoplasm. It is found in the host perinuclear region. Maintains EBV latent infection of B-lymphocyte, by preventing lytic reactivation of the virus in response to surface immunoglobulin (sIg) cross-linking. Acts like a dominant negative inhibitor of the sIg-associated protein tyrosine kinases, LYN and SYK. Also blocks translocation of the B-cell antigen receptor (BCR) into lipid rafts, preventing the subsequent signaling and accelerated internalization of the BCR upon BCR cross-linking. Serves as a molecular scaffold to recruit SYK, LYN and E3 protein-ubiquitin ligases, such as ITCH and NEDD4L, leading to ubiquitination and potential degradation of both tyrosines kinases. Possesses a constitutive signaling activity in non-transformed cells, inducing bypass of normal B lymphocyte developmental checkpoints allowing immunoglobulin-negative cells to colonize peripheral lymphoid organs. Functionally, may be a negative regulator of isoform LMP2A. This Epstein-Barr virus (strain B95-8) (HHV-4) protein is Latent membrane protein 2 (LMP2).